The chain runs to 193 residues: Protein Syd (193 aa).

The protein belongs to the Syd family.

The protein resides in the cell inner membrane. Functionally, interacts with the SecY protein in vivo. May bind preferentially to an uncomplexed state of SecY, thus functioning either as a chelating agent for excess SecY in the cell or as a regulatory factor that negatively controls the translocase function. In Tolumonas auensis (strain DSM 9187 / NBRC 110442 / TA 4), this protein is Protein Syd.